The chain runs to 283 residues: BTB/POZ domain-containing protein KCTD15 (283 aa).

Residues 1–33 are disordered; the sequence is MPHRKERPSGSSLHAHGSTGTAEGGSMSRLSLT. 3 positions are modified to phosphoserine: serine 31, serine 35, and serine 38. Positions 56-126 constitute a BTB domain; that stretch reads APVHIDVGGH…LRTSKLLLPD (71 aa).

Forms oligomers, predominantly homopentamers. Interacts with KCTD1, probably forming heteropentamers depending on its abundance in a cell-type dependent manner. Interacts with TFAP2A; this interaction inhibits TFAP2A transcriptional activation.

It localises to the nucleus. Its function is as follows. During embryonic development, interferes with neural crest formation. Inhibits AP2 transcriptional activity by interaction with its activation domain. The chain is BTB/POZ domain-containing protein KCTD15 (KCTD15) from Bos taurus (Bovine).